Consider the following 417-residue polypeptide: MLRNDSHRAVSPEDGQGRVDDGRPHLACVGALARGFMHIWLQAATLGFAGSVVMSRGPYANAASGAFAVGCAVLGFMRAPPPLARPTARIYAWLKLAAGGAALVLWSLGEPGTQPGAPAPGPATQCLALGAAYAALLVLADDVYPLFLLAPGPLFVGTLGMVVGGLTIGGSARYWWIGGPAAAALAAAVLAGPGATTARDCFSRACPDHRRVCVITAGESLSRRPPEDPERPGVPGPPSPPTPQRSHGPPADEVAPARVARPENVWVPVVTFLGAGALAVKTVREHARGTPGPGLPLWPQVFLGGHVAVALTELCQALPPWDLTDPLLFVHAGLQVINLGLVFRFSEVVVYAALGGAVWISLAQVLGLRRRLHRKDPGDGARLAATLRGLFFSVYALGFGVGVLLCPPGSTGGRSGD.

Residues 1–21 (MLRNDSHRAVSPEDGQGRVDD) form a disordered region. Helical transmembrane passes span 57–77 (GPYANAASGAFAVGCAVLGFM), 90–110 (IYAWLKLAAGGAALVLWSLGE), 119–139 (APGPATQCLALGAAYAALLVL), 146–166 (LFLLAPGPLFVGTLGMVVGGL), and 175–195 (WWIGGPAAAALAAAVLAGPGA). The segment at 217-254 (AGESLSRRPPEDPERPGVPGPPSPPTPQRSHGPPADEV) is disordered. Basic and acidic residues predominate over residues 221–231 (LSRRPPEDPER). The segment covering 232 to 243 (PGVPGPPSPPTP) has biased composition (pro residues). Helical transmembrane passes span 263 to 283 (ENVWVPVVTFLGAGALAVKTV), 291 to 311 (PGPGLPLWPQVFLGGHVAVAL), 323 to 343 (LTDPLLFVHAGLQVINLGLVF), 348 to 368 (VVVYAALGGAVWISLAQVLGL), and 389 to 409 (GLFFSVYALGFGVGVLLCPPG).

The protein belongs to the alphaherpesvirinae HHV-1 UL43 family.

Its subcellular location is the membrane. The polypeptide is Membrane protein UL43 (Human herpesvirus 1 (strain 17) (HHV-1)).